We begin with the raw amino-acid sequence, 1446 residues long: ABC transporter G family member 53 (1446 aa).

Residues 153-426 enclose the ABC transporter 1 domain; that stretch reads ANTLHITPNR…FESVGFKCPE (274 aa). Position 186–193 (186–193) interacts with ATP; the sequence is GPPGAGKT. Residues 504–717 enclose the ABC transmembrane type-2 1 domain; the sequence is ELLKANIDRE…AQNAISVNEF (214 aa). The next 6 membrane-spanning stretches (helical) occupy residues 523 to 543, 555 to 575, 610 to 630, 641 to 661, 666 to 686, and 752 to 772; these read VYIF…TVFI, GGIY…NGLA, TPLS…VIGF, FLLL…IAGF, VVAS…GGFI, and IGVG…TICL. The 253-residue stretch at 849–1101 folds into the ABC transporter 2 domain; it reads ITFEDIRYSV…ELIRYFESIE (253 aa). ATP is bound at residue 894 to 901; sequence GVSGAGKT. The 215-residue stretch at 1174–1388 folds into the ABC transmembrane type-2 2 domain; it reads TQCLACLWKQ…TLYGLVTSQF (215 aa). Helical transmembrane passes span 1195-1215, 1225-1242, 1281-1301, 1308-1328, 1338-1358, 1363-1383, and 1415-1435; these read AVKY…FWGV, LFNA…MGVQ, LPYI…MIGF, FFWY…YGMM, VASV…GFII, IPIW…LYGL, and FLWV…FLFG.

It belongs to the ABC transporter superfamily. ABCG family. PDR (TC 3.A.1.205) subfamily.

The protein resides in the membrane. Its function is as follows. May be a general defense protein. In Oryza sativa subsp. japonica (Rice), this protein is ABC transporter G family member 53.